Here is a 543-residue protein sequence, read N- to C-terminus: Malate synthase (543 aa).

The protein belongs to the malate synthase family. In terms of assembly, homodimer.

Its subcellular location is the cytoplasm. The enzyme catalyses glyoxylate + acetyl-CoA + H2O = (S)-malate + CoA + H(+). It functions in the pathway carbohydrate metabolism; glyoxylate cycle; (S)-malate from isocitrate: step 2/2. This is Malate synthase (aceB) from Streptomyces arenae.